The following is a 226-amino-acid chain: Isoprenyl transferase (226 aa).

Residue D12 is part of the active site. D12 lines the Mg(2+) pocket. Substrate contacts are provided by residues 13–16 (GNAR), W17, K25, H29, and 57–59 (SSE). The active-site Proton acceptor is the N60. Substrate contacts are provided by residues W61, R63, R174, and 180–182 (RIS). Residue E193 participates in Mg(2+) binding.

Belongs to the UPP synthase family. As to quaternary structure, homodimer. Mg(2+) is required as a cofactor.

Its function is as follows. Catalyzes the condensation of isopentenyl diphosphate (IPP) with allylic pyrophosphates generating different type of terpenoids. The chain is Isoprenyl transferase from Rickettsia sibirica (strain ATCC VR-151 / 246).